The sequence spans 596 residues: Inactive metallocarboxypeptidase ecm14 (596 aa).

Positions 1-26 are cleaved as a signal peptide; it reads MSQSHSILSSLILLVAIIFCVPHVIA. Residues 27–190 constitute a propeptide that is removed on maturation; it reads VPWTTDGHAQ…SYPSMAYADA (164 aa). A glycan (N-linked (GlcNAc...) asparagine) is linked at asparagine 114. In terms of domain architecture, Peptidase M14 spans 220–540; that stretch reads NYQPLSVIIP…NVIKYFGDFL (321 aa). Histidine 285 and glutamate 288 together coordinate Zn(2+). Residues 285 to 288, arginine 343, and 360 to 361 contribute to the substrate site; these read HARE and DR. Cysteine 354 and cysteine 376 form a disulfide bridge. A glycan (N-linked (GlcNAc...) asparagine) is linked at asparagine 400. Histidine 416 contributes to the Zn(2+) binding site. 417-418 serves as a coordination point for substrate; the sequence is SY.

It belongs to the peptidase M14 family. Zn(2+) serves as cofactor.

Its subcellular location is the vacuole. The protein resides in the secreted. In terms of biological role, inactive carboxypeptidase that may play a role in cell wall organization and biogenesis. This Sclerotinia sclerotiorum (strain ATCC 18683 / 1980 / Ss-1) (White mold) protein is Inactive metallocarboxypeptidase ecm14 (ecm14).